Here is a 397-residue protein sequence, read N- to C-terminus: Aurora kinase A (397 aa).

The disordered stretch occupies residues 1–118 (MDRCKENCVS…SIQKTEDSKK (118 aa)). Composition is skewed to polar residues over residues 29-55 (QIPS…SQRV) and 84-102 (RLSN…SGNN). Residues serine 40 and serine 50 each carry the phosphoserine modification. Residues 103–118 (SEKEQTSIQKTEDSKK) are compositionally biased toward basic and acidic residues. Positions 126–376 (FDIGRPLGKG…LAEVLEHPWI (251 aa)) constitute a Protein kinase domain. ATP is bound by residues lysine 136, lysine 155, and 203–206 (LEYA). The Proton acceptor role is filled by aspartate 249. A Glycyl lysine isopeptide (Lys-Gly) (interchain with G-Cter in SUMO2) cross-link involves residue lysine 251. ATP is bound by residues 253 to 254 (EN) and aspartate 267. Positions 273-286 (HAPSSRRTTLCGTL) are activation segment. Threonine 280 and threonine 281 each carry phosphothreonine. Position 335 is a phosphoserine; by PKA and PAK (serine 335). The span at 378 to 387 (ANSSKPPTGH) shows a compositional bias: polar residues. Residues 378–397 (ANSSKPPTGHNSKEATSKSS) are disordered. The segment covering 388–397 (NSKEATSKSS) has biased composition (basic and acidic residues).

It belongs to the protein kinase superfamily. Ser/Thr protein kinase family. Aurora subfamily. Part of a complex composed of NEDD9, AURKA and CTTN; within the complex NEDD9 acts as a scaffold protein and is required for complex formation. Identified in a complex with AUNIP and NIN. Interacts with CPEB1, JTB, TACC1, TPX2, PPP2CA, as well as with the protein phosphatase type 1 (PP1) isoforms PPP1CA, PPP1CB and PPP1CC. Also interacts with its substrates ARHGEF2, BORA, KIF2A, PARD3, and p53/TP53. Interaction with BORA promotes phosphorylation of PLK1. Interacts with FBXL7 and CIMAP3. Interacts with GADD45A, competing with its oligomerization. Interacts (via C-terminus) with AUNIP (via C-terminus). Interacts with SIRT2. Interacts with FRY; this interaction facilitates AURKA-mediated PLK1 phosphorylation. Interacts with MYCN; interaction is phospho-independent and triggers AURKA activation; AURKA competes with FBXW7 for binding to unphosphorylated MYCN but not for binding to phosphorylated MYCN. Interacts with HNRNPU. Interacts with AAAS. Interacts with KLHL18 and CUL3. Interacts with FOXP1. Interacts with HDAC6; AURKA-mediated phosphorylation of HDAC6 promotes deacetylation of alpha-tubulin. Post-translationally, activated by phosphorylation at Thr-281; this brings about a change in the conformation of the activation segment. Phosphorylation at Thr-281 varies during the cell cycle and is highest during M phase. Autophosphorylated at Thr-281 upon TPX2 binding. Thr-281 can be phosphorylated by several kinases, including PAK and PKA. Protein phosphatase type 1 (PP1) binds AURKA and inhibits its activity by dephosphorylating Thr-281 during mitosis. Phosphorylation at Ser-335 decreases the kinase activity. PPP2CA controls degradation by dephosphorylating Ser-52 at the end of mitosis. Phosphorylated in embryonic brain neurons. In terms of processing, ubiquitinated by CHFR, leading to its degradation by the proteasome. Ubiquitinated by the anaphase-promoting complex (APC), leading to its degradation by the proteasome. Ubiquitinated by the E3 ubiquitin-protein ligase complex SCF(FBXL7) during mitosis, leading to its degradation by the proteasome. Ubiquitinated by the CUL3-KLHL18 ligase leading to its activation at the centrosome which is required for initiating mitotic entry. Ubiquitination mediated by CUL3-KLHL18 ligase does not lead to its degradation by the proteasome. As to expression, detected in neurons in brain cortex and hippocampus (at protein level). Expressed in mammary gland and tumor.

Its subcellular location is the cytoplasm. The protein localises to the cytoskeleton. It localises to the microtubule organizing center. It is found in the centrosome. The protein resides in the spindle pole. Its subcellular location is the centriole. The protein localises to the cell projection. It localises to the neuron projection. It is found in the cilium. The protein resides in the cilium basal body. Its subcellular location is the basolateral cell membrane. The catalysed reaction is L-seryl-[protein] + ATP = O-phospho-L-seryl-[protein] + ADP + H(+). The enzyme catalyses L-threonyl-[protein] + ATP = O-phospho-L-threonyl-[protein] + ADP + H(+). With respect to regulation, activation of CDK1, appears to be an upstream event of AURKA activation. Phosphatase inhibitor-2 (PPP1R2) and TPX2 act also as activators. Inactivated by the G2 checkpoint. Inhibited by GADD45A and p53/TP53, and through dephosphorylation by protein phosphatase type 1 (PP1). MLN8054 is also a potent and selective inhibitor. Activated during the early phase of cilia disassembly in the presence of FBXL7 and CIMAP3. Inhibited by the small molecule inhibitor VX-680. Mitotic serine/threonine kinase that contributes to the regulation of cell cycle progression. Associates with the centrosome and the spindle microtubules during mitosis and plays a critical role in various mitotic events including the establishment of mitotic spindle, centrosome duplication, centrosome separation as well as maturation, chromosomal alignment, spindle assembly checkpoint, and cytokinesis. Required for normal spindle positioning during mitosis and for the localization of NUMA1 and DCTN1 to the cell cortex during metaphase. Required for initial activation of CDK1 at centrosomes. Phosphorylates numerous target proteins, including ARHGEF2, BORA, BRCA1, CDC25B, DLGP5, HDAC6, KIF2A, LATS2, NDEL1, PARD3, PPP1R2, PLK1, RASSF1, TACC3, p53/TP53 and TPX2. Phosphorylates MCRS1 which is required for MCRS1-mediated kinetochore fiber assembly and mitotic progression. Regulates KIF2A tubulin depolymerase activity. Required for normal axon formation. Plays a role in microtubule remodeling during neurite extension. Important for microtubule formation and/or stabilization. Also acts as a key regulatory component of the p53/TP53 pathway, and particularly the checkpoint-response pathways critical for oncogenic transformation of cells, by phosphorylating and stabilizating p53/TP53. Phosphorylates its own inhibitors, the protein phosphatase type 1 (PP1) isoforms, to inhibit their activity. Inhibits cilia outgrowth. Required for cilia disassembly via phosphorylation of HDAC6 and subsequent deacetylation of alpha-tubulin. Regulates protein levels of the anti-apoptosis protein BIRC5 by suppressing the expression of the SCF(FBXL7) E3 ubiquitin-protein ligase substrate adapter FBXL7 through the phosphorylation of the transcription factor FOXP1. This Rattus norvegicus (Rat) protein is Aurora kinase A.